A 102-amino-acid polypeptide reads, in one-letter code: MGNIPLEHGLIVATILFALGFYGVMVRRNLLFMLMSLEIMMNAAALAFVLAGSVWAQPDGQIMFILILTLAAAEACIGLAIVLQFYHRFHHLDVDAASEMRG.

Helical transmembrane passes span 6 to 26 (LEHG…GVMV), 30 to 50 (LLFM…AFVL), and 62 to 82 (IMFI…LAIV).

This sequence belongs to the complex I subunit 4L family. In terms of assembly, NDH-1 is composed of 14 different subunits. Subunits NuoA, H, J, K, L, M, N constitute the membrane sector of the complex.

It localises to the cell inner membrane. It carries out the reaction a quinone + NADH + 5 H(+)(in) = a quinol + NAD(+) + 4 H(+)(out). Functionally, NDH-1 shuttles electrons from NADH, via FMN and iron-sulfur (Fe-S) centers, to quinones in the respiratory chain. The immediate electron acceptor for the enzyme in this species is believed to be ubiquinone. Couples the redox reaction to proton translocation (for every two electrons transferred, four hydrogen ions are translocated across the cytoplasmic membrane), and thus conserves the redox energy in a proton gradient. This is NADH-quinone oxidoreductase subunit K from Acinetobacter baylyi (strain ATCC 33305 / BD413 / ADP1).